Reading from the N-terminus, the 125-residue chain is Small ribosomal subunit protein eS6 (125 aa).

Belongs to the eukaryotic ribosomal protein eS6 family.

The sequence is that of Small ribosomal subunit protein eS6 from Thermococcus onnurineus (strain NA1).